The chain runs to 109 residues: uncharacterized protein (109 aa).

It localises to the mitochondrion. This is an uncharacterized protein from Saccharomyces cerevisiae (strain ATCC 204508 / S288c) (Baker's yeast).